The chain runs to 98 residues: MTATTQADRYISFSGIDCDGNAKIVLERVVALVALPEYANCFWDRFLIRLAEADKVGARKADELCLACSNTYYIEELFEAAGDEMGLAALRRLEDECC.

It belongs to the CowN family.

In terms of biological role, is required to sustain N(2)-dependent growth in the presence of low levels of carbon monoxide (CO). Probably acts by protecting the N(2) fixation ability of the nitrogenase complex, which is inactivated in the presence of CO. This Paramagnetospirillum magneticum (strain ATCC 700264 / AMB-1) (Magnetospirillum magneticum) protein is N(2)-fixation sustaining protein CowN.